A 574-amino-acid chain; its full sequence is Protein OBERON 2 (574 aa).

2 stretches are compositionally biased toward polar residues: residues 1–10 (MGTSSGSNHP) and 65–76 (SMSQKTEPDSME). Residues 1–76 (MGTSSGSNHP…SQKTEPDSME (76 aa)) form a disordered region. The PHD-type zinc-finger motif lies at 226–291 (LCMCTICNKF…VFKCRACNRT (66 aa)). Residues 416–524 (KKARMALETC…LFEKIKLQEN (109 aa)) adopt a coiled-coil conformation.

In terms of assembly, self-interacts. Interacts with OBE1, OBE3 and OBE4. Binds to VPg of pea seed borne mosaic virus (PSbMV), turnip mosaic virus (TuMV) and lettuce mosaic virus (LMV), but not with VPg of tobacco etch virus (TEV), cowpea mosaic virus (CPMV), tomato black ring virus (TBRV) and grapevine fan leaf virus (GFLV). As to expression, expressed in roots, seedlings, stems, leaves, flowers and siliques, especially in the vasculature.

It localises to the nucleus. Probable transcription factor that acts together with OBE1 for the maintenance and/or establishment of both the shoot and root meristems, probably by controlling the expression of the meristem genes such as WUS, PLT1 and PLT2 and of genes required for auxin responses. Promotes cell meristematic activity via the WUSCHEL-CLAVATA pathway. Involved in the development of the basal pole and in auxin-mediated root and vascular development in the embryo. Confers sensitivity to turnip mosaic virus (TuMV) probably by promoting viral movement and multiplication via interaction with TuMV VPg. The sequence is that of Protein OBERON 2 from Arabidopsis thaliana (Mouse-ear cress).